The chain runs to 899 residues: Probable dipeptidyl-aminopeptidase B (899 aa).

Disordered regions lie at residues 1–37 (MARK…SDGS) and 51–84 (KITR…TENS). Residues 1 to 91 (MARKDKDNGP…ENSKRNRGSR (91 aa)) lie on the Cytoplasmic side of the membrane. Residues 22-37 (SSASFSSTDSLSSDGS) show a composition bias toward low complexity. The span at 61-74 (NPYRDDDVELERGD) shows a compositional bias: basic and acidic residues. A helical; Signal-anchor for type II membrane protein transmembrane segment spans residues 92–112 (LIWVVGLLCLGGWILAFVLFW). Residues 113–899 (GRRNSELSSS…QQGNSVLPVT (787 aa)) lie on the Vacuolar side of the membrane. Residues Asn149, Asn194, Asn347, Asn409, Asn513, Asn638, and Asn643 are each glycosylated (N-linked (GlcNAc...) asparagine). Catalysis depends on Ser752, which acts as the Charge relay system. The N-linked (GlcNAc...) asparagine glycan is linked to Asn811. Residues Asp829 and His862 each act as charge relay system in the active site.

It belongs to the peptidase S9B family.

It localises to the vacuole membrane. It catalyses the reaction Release of an N-terminal dipeptide, Xaa-Yaa-|-Zaa-, from a polypeptide, preferentially when Yaa is Pro, provided Zaa is neither Pro nor hydroxyproline.. In terms of biological role, type IV dipeptidyl-peptidase which removes N-terminal dipeptides sequentially from polypeptides having unsubstituted N-termini provided that the penultimate residue is proline. This Talaromyces marneffei (strain ATCC 18224 / CBS 334.59 / QM 7333) (Penicillium marneffei) protein is Probable dipeptidyl-aminopeptidase B (dapB).